A 1274-amino-acid chain; its full sequence is VWFA and cache domain-containing protein 1 (1274 aa).

A signal peptide spans 1–35; it reads MARQPEEEETAVARARRPPLWLLCLVACWLLGAGA. Over 36-1095 the chain is Extracellular; sequence EADFSILDEA…ITLNMIKSAP (1060 aa). N145 carries an N-linked (GlcNAc...) asparagine glycan. In terms of domain architecture, VWFA spans 228–443; that stretch reads HIVVILDHGA…TTVGRFYTNL (216 aa). 2 Cache domains span residues 453–532 and 772–853; these read FSLP…SEPP and LTGP…HPTL. Residues 1096–1116 form a helical membrane-spanning segment; sequence VGPVAGGIMGCIMVLVLAVYA. Residues 1117–1274 lie on the Cytoplasmic side of the membrane; that stretch reads YRHQIHRRSH…VTVHTVDAEC (158 aa). The disordered stretch occupies residues 1179-1227; the sequence is PERRRRYWGRSGTESDHGYSTMSPQEDSENPPCNNDPLSAGVDVGNHDE. The span at 1196 to 1215 shows a compositional bias: polar residues; the sequence is GYSTMSPQEDSENPPCNNDP.

The protein belongs to the calcium channel subunit alpha-2/delta family.

It localises to the membrane. May regulate voltage-dependent calcium channels. This is VWFA and cache domain-containing protein 1 (CACHD1) from Homo sapiens (Human).